The sequence spans 468 residues: ATP synthase subunit beta (468 aa).

Residue 155 to 162 participates in ATP binding; the sequence is GGAGVGKT.

The protein belongs to the ATPase alpha/beta chains family. In terms of assembly, F-type ATPases have 2 components, CF(1) - the catalytic core - and CF(0) - the membrane proton channel. CF(1) has five subunits: alpha(3), beta(3), gamma(1), delta(1), epsilon(1). CF(0) has three main subunits: a(1), b(2) and c(9-12). The alpha and beta chains form an alternating ring which encloses part of the gamma chain. CF(1) is attached to CF(0) by a central stalk formed by the gamma and epsilon chains, while a peripheral stalk is formed by the delta and b chains.

It localises to the cell membrane. It carries out the reaction ATP + H2O + 4 H(+)(in) = ADP + phosphate + 5 H(+)(out). In terms of biological role, produces ATP from ADP in the presence of a proton gradient across the membrane. The catalytic sites are hosted primarily by the beta subunits. The protein is ATP synthase subunit beta of Streptococcus thermophilus (strain CNRZ 1066).